A 1372-amino-acid chain; its full sequence is DNA-directed RNA polymerase subunit beta' (1372 aa).

Residues Cys-69, Cys-71, Cys-84, and Cys-87 each contribute to the Zn(2+) site. Residues Asp-460, Asp-462, and Asp-464 each contribute to the Mg(2+) site. Zn(2+) is bound by residues Cys-808, Cys-882, Cys-889, and Cys-892.

Belongs to the RNA polymerase beta' chain family. The RNAP catalytic core consists of 2 alpha, 1 beta, 1 beta' and 1 omega subunit. When a sigma factor is associated with the core the holoenzyme is formed, which can initiate transcription. Mg(2+) is required as a cofactor. Requires Zn(2+) as cofactor.

It carries out the reaction RNA(n) + a ribonucleoside 5'-triphosphate = RNA(n+1) + diphosphate. Functionally, DNA-dependent RNA polymerase catalyzes the transcription of DNA into RNA using the four ribonucleoside triphosphates as substrates. The protein is DNA-directed RNA polymerase subunit beta' of Rickettsia typhi (strain ATCC VR-144 / Wilmington).